The sequence spans 272 residues: Flt3 receptor-interacting lectin (272 aa).

An N-terminal signal peptide occupies residues 1–8 (MFPSKVKS). Residues Asp94 and Gly112 each contribute to the alpha-D-mannopyranose site. N-linked (GlcNAc...) asparagine glycans are attached at residues Asn125 and Asn131. Residues Asn152 and 237–238 (QD) each bind alpha-D-mannopyranose.

It belongs to the leguminous lectin family. Dimer (alpha/beta)2. Tetramer (alpha/beta)4. In terms of processing, glycosylated at Asn-125 by either a paucimannose type N-glycan (alpha-4) or a single N-acetylglucosamine (alpha-3). Glycosylated at Asn-131 by a paucimannose type N-glycan (alpha-2, alpha-3 and alpha-4). In alpha-2, Asn-125 is deamidated to an Asp, possibly due to the action of intrinsic peptide N-glycosidase (PGNase).

Its subcellular location is the protein storage vacuole lumen. Mannose-binding lectin. Accommodates most effectively a non-reducing terminal alpha-d-mannosyl unit. Strongly precipitates murine IgM but not IgG. The sequence is that of Flt3 receptor-interacting lectin from Lablab purpureus (Hyacinth bean).